Here is a 163-residue protein sequence, read N- to C-terminus: uncharacterized protein (163 aa).

The N-acetyltransferase domain occupies I7–S162.

It belongs to the acetyltransferase family.

Its subcellular location is the cytoplasm. The protein resides in the nucleus. This is an uncharacterized protein from Schizosaccharomyces pombe (strain 972 / ATCC 24843) (Fission yeast).